We begin with the raw amino-acid sequence, 29 residues long: Trypsin inhibitor 3 (29 aa).

Disulfide bonds link Cys3–Cys20, Cys10–Cys22, and Cys16–Cys28.

The protein belongs to the protease inhibitor I7 (squash-type serine protease inhibitor) family.

Its subcellular location is the secreted. Strongly inhibits trypsin, weakly inhibits chymotrypsin. In Cyclanthera pedata (Achocha), this protein is Trypsin inhibitor 3.